Consider the following 322-residue polypeptide: Ribosome biogenesis protein RLP7 (322 aa).

Positions 1 to 16 (MSSTQDSKAQTLNSNP) are enriched in polar residues. Positions 1–52 (MSSTQDSKAQTLNSNPEILLRKRRNADRTRIERQELAKKKREEQIKKKRSNK) are disordered. An N-acetylserine modification is found at serine 2. A Phosphoserine modification is found at serine 14. Residues 26 to 45 (ADRTRIERQELAKKKREEQI) show a composition bias toward basic and acidic residues. Threonine 120 is modified (phosphothreonine). The residue at position 278 (serine 278) is a Phosphoserine.

Belongs to the universal ribosomal protein uL30 family.

Its subcellular location is the nucleus. It is found in the nucleolus. Its function is as follows. Involved in the biogenesis of the 60S ribosomal subunit. May act as a specificity factor that binds precursor rRNAs and tethers the enzymes that carry out the early 5' to 3' exonucleolytic reactions that generate the mature rRNAs. This Saccharomyces cerevisiae (strain ATCC 204508 / S288c) (Baker's yeast) protein is Ribosome biogenesis protein RLP7 (RLP7).